The sequence spans 415 residues: Fructose-like permease IIC component (415 aa).

Residues 1–46 (MAIKKRSATVVPGASGAAAAVKNPQASKSSFWGELPQHVMSGISRM) are Cytoplasmic-facing. In terms of domain architecture, PTS EIIC type-2 spans 35-410 (LPQHVMSGIS…RLMMFRKGKL (376 aa)). Residues 47 to 67 (VPTLIMGGVILAFSQLIAYSW) traverse the membrane as a helical segment. Residues 68–101 (LKIPAEIGIMDALNSGKFSGFDLSLLKFAWLSQS) are Periplasmic-facing. Residues 102–122 (FGGVLFGFAIPMFAAFVANSI) traverse the membrane as a helical segment. The Cytoplasmic segment spans residues 123 to 126 (GGKL). A helical membrane pass occupies residues 127 to 147 (AFPAGFIGGLMSTQPTQLLNF). The Periplasmic portion of the chain corresponds to 148-157 (DPSTMQWATS). The helical transmembrane segment at 158–178 (SPVPSTFIGALIISIVAGYLV) threads the bilayer. The Cytoplasmic portion of the chain corresponds to 179–197 (KWMNQKIQLPDFLLAFKTT). The helical transmembrane segment at 198 to 218 (FLLPILSAIFVMLAMYYVITP) threads the bilayer. Residues 219–237 (FGGWINGGIRTVLTAAGEK) are Periplasmic-facing. A helical transmembrane segment spans residues 238 to 258 (GALMYAMGIAAATAIDLGGPI). Residues 259-276 (NKAAGFVAFSFTTDHVLP) lie on the Cytoplasmic side of the membrane. Residues 277–297 (VTARSIAIVIPPIGLGLATII) traverse the membrane as a helical segment. Residues 298 to 318 (DRRLTGKRLFNAQLYPQGKTA) lie on the Periplasmic side of the membrane. A helical membrane pass occupies residues 319–339 (MFLAFMGISEGAIPFALESPI). Topologically, residues 340–341 (TA) are cytoplasmic. Residues 342–362 (IPSYMVGAIVGSTAAVWLGAV) form a helical membrane-spanning segment. Residues 363-378 (QWFPESAIWAWPLVTN) lie on the Periplasmic side of the membrane. The helical transmembrane segment at 379-399 (LGVYMAGIALGAVITALMVVF) threads the bilayer. Residues 400–415 (LRLMMFRKGKLLIDSL) are Cytoplasmic-facing.

Its subcellular location is the cell inner membrane. Functionally, the phosphoenolpyruvate-dependent sugar phosphotransferase system (PTS), a major carbohydrate active -transport system, catalyzes the phosphorylation of incoming sugar substrates concomitant with their translocation across the cell membrane. The protein is Fructose-like permease IIC component (fryC) of Escherichia coli O157:H7.